A 343-amino-acid chain; its full sequence is Protein RecA (343 aa).

64–71 (GPESSGKT) serves as a coordination point for ATP.

The protein belongs to the RecA family.

It is found in the cytoplasm. Can catalyze the hydrolysis of ATP in the presence of single-stranded DNA, the ATP-dependent uptake of single-stranded DNA by duplex DNA, and the ATP-dependent hybridization of homologous single-stranded DNAs. It interacts with LexA causing its activation and leading to its autocatalytic cleavage. In Bacillus cereus (strain B4264), this protein is Protein RecA.